Consider the following 341-residue polypeptide: uncharacterized protein (341 aa).

The stretch at Ala-153–His-179 forms a coiled coil. Residues Glu-319–Thr-335 show a composition bias toward polar residues. Residues Glu-319–Pro-341 are disordered.

This is an uncharacterized protein from Coxiella burnetii (strain RSA 493 / Nine Mile phase I).